A 471-amino-acid chain; its full sequence is Uronate isomerase (471 aa).

Belongs to the metallo-dependent hydrolases superfamily. Uronate isomerase family.

It carries out the reaction D-glucuronate = D-fructuronate. It catalyses the reaction aldehydo-D-galacturonate = keto-D-tagaturonate. It participates in carbohydrate metabolism; pentose and glucuronate interconversion. In Cellvibrio japonicus (strain Ueda107) (Pseudomonas fluorescens subsp. cellulosa), this protein is Uronate isomerase.